A 177-amino-acid chain; its full sequence is Platelet glycoprotein IX (177 aa).

Residues 1–16 form the signal peptide; it reads MPAWGALFLLWATAEA. The LRRNT domain occupies 17–51; sequence TKDCPSPCTCRALETMGLWVDCRGHGLTALPALPA. Residues 17 to 147 lie on the Extracellular side of the membrane; it reads TKDCPSPCTC…QLQASWVRPG (131 aa). Asparagine 60 is a glycosylation site (N-linked (GlcNAc...) asparagine). One copy of the LRR repeat lies at 60-83; sequence NNSLQSVPPGAFDHLPQLQTLDVT. One can recognise an LRRCT domain in the interval 85–137; it reads NPWHCDCSLTYLRLWLEDRTPEALLQVRCASPSLAAHGPLGRLTGYQLGSCGW. The helical transmembrane segment at 148–168 threads the bilayer; that stretch reads VLWDVALVAVAALGLALLAGL. The Cytoplasmic segment spans residues 169-177; that stretch reads LCATTEALD.

As to quaternary structure, two GP-Ib beta are disulfide-linked to one GP-Ib alpha. GP-IX is complexed with the GP-Ib heterodimer via a non covalent linkage.

Its subcellular location is the membrane. The GPIb-V-IX complex functions as the vWF receptor and mediates vWF-dependent platelet adhesion to blood vessels. The adhesion of platelets to injured vascular surfaces in the arterial circulation is a critical initiating event in hemostasis. GP-IX may provide for membrane insertion and orientation of GP-Ib. The sequence is that of Platelet glycoprotein IX (GP9) from Homo sapiens (Human).